The following is a 614-amino-acid chain: BTB/POZ domain-containing protein At5g48800 (614 aa).

The BTB domain occupies 43 to 111 (SDITIEVNGG…CYGINFEITS (69 aa)). The 266-residue stretch at 219-484 (DWWIEDLSVL…VQVLYFEQLK (266 aa)) folds into the NPH3 domain. Phosphotyrosine is present on tyrosine 425. Disordered regions lie at residues 492–525 (SYSDEEPKPKQQQQQSWRINSGALSATMSPKDNY) and 583–614 (GHSSSRGSSSPSKQSFRTDSKVLMERTCASTD). Over residues 507 to 521 (SWRINSGALSATMSP) the composition is skewed to polar residues. A coiled-coil region spans residues 522–562 (KDNYASLRRENRELKLELARLRMRLNDLEKEHICMKRDMQR). The span at 583–597 (GHSSSRGSSSPSKQS) shows a compositional bias: low complexity.

This sequence belongs to the NPH3 family.

The protein operates within protein modification; protein ubiquitination. Its function is as follows. May act as a substrate-specific adapter of an E3 ubiquitin-protein ligase complex (CUL3-RBX1-BTB) which mediates the ubiquitination and subsequent proteasomal degradation of target proteins. The sequence is that of BTB/POZ domain-containing protein At5g48800 from Arabidopsis thaliana (Mouse-ear cress).